A 95-amino-acid polypeptide reads, in one-letter code: Protein TusB (95 aa).

It belongs to the DsrH/TusB family. Heterohexamer, formed by a dimer of trimers. The hexameric TusBCD complex contains 2 copies each of TusB, TusC and TusD. The TusBCD complex interacts with TusE.

The protein resides in the cytoplasm. Part of a sulfur-relay system required for 2-thiolation of 5-methylaminomethyl-2-thiouridine (mnm(5)s(2)U) at tRNA wobble positions. This is Protein TusB from Shigella dysenteriae serotype 1 (strain Sd197).